The sequence spans 111 residues: Large ribosomal subunit protein uL22 (111 aa).

Belongs to the universal ribosomal protein uL22 family. In terms of assembly, part of the 50S ribosomal subunit.

Its function is as follows. This protein binds specifically to 23S rRNA; its binding is stimulated by other ribosomal proteins, e.g. L4, L17, and L20. It is important during the early stages of 50S assembly. It makes multiple contacts with different domains of the 23S rRNA in the assembled 50S subunit and ribosome. In terms of biological role, the globular domain of the protein is located near the polypeptide exit tunnel on the outside of the subunit, while an extended beta-hairpin is found that lines the wall of the exit tunnel in the center of the 70S ribosome. The sequence is that of Large ribosomal subunit protein uL22 from Chlamydia muridarum (strain MoPn / Nigg).